Consider the following 394-residue polypeptide: Protein TsgA homolog (394 aa).

Transmembrane regions (helical) follow at residues 11–31 (WISY…GMVM), 51–71 (FLNA…EIIP), 76–96 (LVFG…GHNL), 101–121 (ISMF…TFLI), 134–154 (LLFT…AAAI), 162–182 (WYWV…LTLC), 206–226 (MGVL…LGFI), 246–266 (QLVS…SFIL), 274–294 (IVTV…STNN), 302–322 (ILAL…LGSL), 334–354 (FILT…GPIV), and 363–383 (LATA…LGFF).

Belongs to the major facilitator superfamily. TsgA family.

It is found in the cell inner membrane. This chain is Protein TsgA homolog, found in Yersinia enterocolitica serotype O:8 / biotype 1B (strain NCTC 13174 / 8081).